Consider the following 875-residue polypeptide: Valine--tRNA ligase (875 aa).

The 'HIGH' region signature appears at 45-55 (PNVTGVLHMGH). A 'KMSKS' region motif is present at residues 524–528 (KMSKS). Residue K527 participates in ATP binding. Residues 803-837 (VKSLIDKTKELIRLEKQLEKYKMLNISVSKKLENE) are a coiled coil.

Belongs to the class-I aminoacyl-tRNA synthetase family. ValS type 1 subfamily. In terms of assembly, monomer.

Its subcellular location is the cytoplasm. It catalyses the reaction tRNA(Val) + L-valine + ATP = L-valyl-tRNA(Val) + AMP + diphosphate. Its function is as follows. Catalyzes the attachment of valine to tRNA(Val). As ValRS can inadvertently accommodate and process structurally similar amino acids such as threonine, to avoid such errors, it has a 'posttransfer' editing activity that hydrolyzes mischarged Thr-tRNA(Val) in a tRNA-dependent manner. This Borreliella burgdorferi (strain ATCC 35210 / DSM 4680 / CIP 102532 / B31) (Borrelia burgdorferi) protein is Valine--tRNA ligase.